A 93-amino-acid chain; its full sequence is UPF0250 protein PA3998 (93 aa).

It belongs to the UPF0250 family.

This is UPF0250 protein PA3998 from Pseudomonas aeruginosa (strain ATCC 15692 / DSM 22644 / CIP 104116 / JCM 14847 / LMG 12228 / 1C / PRS 101 / PAO1).